Here is a 332-residue protein sequence, read N- to C-terminus: Adenosine receptor A2b (332 aa).

Topologically, residues 1-8 (MLLETQDA) are extracellular. The helical transmembrane segment at 9–33 (LYVALELVIAALSVAGNVLVCAAVG) threads the bilayer. The Cytoplasmic portion of the chain corresponds to 34-43 (TANTLQTPTN). Residues 44–67 (YFLVSLAAADVAVGLFAIPFAITI) traverse the membrane as a helical segment. The Extracellular portion of the chain corresponds to 68-78 (SLGFCTDFYGC). An intrachain disulfide couples cysteine 78 to cysteine 171. The chain crosses the membrane as a helical span at residues 79 to 101 (LFLACFVLVLTQSSIFSLLAVAV). At 102–121 (DRYLAICVPLRYKSLVTGTR) the chain is on the cytoplasmic side. The helical transmembrane segment at 122–144 (ARGVIAVLWVLAFGIGLTPFLGW) threads the bilayer. The Extracellular portion of the chain corresponds to 145-178 (NSKDSATNNCTEPWDGTTNESCCLVKCLFENVVP). Residues asparagine 153 and asparagine 163 are each glycosylated (N-linked (GlcNAc...) asparagine). Glutamate 174 is an adenosine binding site. Residues 179-203 (MSYMVYFNFFGCVLPPLLIMLVIYI) form a helical membrane-spanning segment. Topologically, residues 204–235 (KIFLVACRQLQRTELMDHSRTTLQREIHAAKS) are cytoplasmic. The chain crosses the membrane as a helical span at residues 236 to 259 (LAMIVGIFALCWLPVHAVNCVTLF). Asparagine 254 provides a ligand contact to adenosine. At 260 to 267 (QPAQGKNK) the chain is on the extracellular side. A helical membrane pass occupies residues 268-291 (PKWAMNMAILLSHANSVVNPIVYA). Serine 279 and histidine 280 together coordinate adenosine. Residues 292–332 (YRNRDFRYTFHKIISRYLLCQADVKSGNGQAGVQPALGVGL) lie on the Cytoplasmic side of the membrane. The S-palmitoyl cysteine moiety is linked to residue cysteine 311.

Belongs to the G-protein coupled receptor 1 family.

It is found in the cell membrane. Its function is as follows. Receptor for adenosine. The activity of this receptor is mediated by G proteins which activate adenylyl cyclase. In Homo sapiens (Human), this protein is Adenosine receptor A2b (ADORA2B).